A 338-amino-acid chain; its full sequence is Lumican (338 aa).

Positions 1 to 18 are cleaved as a signal peptide; that stretch reads MNVCAFSLALALVGSVSG. Pyrrolidone carboxylic acid is present on glutamine 19. A sulfotyrosine mark is found at tyrosine 20, tyrosine 21, tyrosine 23, and tyrosine 30. The LRRNT domain maps to 28–66; sequence FMYGQISPNCAPECNCPHSYPTAMYCDDLKLKSVPMVPP. LRR repeat units follow at residues 67–88, 91–114, 117–137, 138–159, 160–181, 185–205, 206–227, and 230–250; these read GIKYLYLRNNQIDHIDEKAFEN, DLQWLILDHNLLENSKIKGKVFSK, QLKKLHINYNNLTESVGPLPK, SLQDLQLTNNKISKLGSFDGLV, NLTFIYLQHNQLKEDAVSASLK, SLEYLDLSFNQMSKLPAGLPT, SLLTLYLDNNKISNIPDEYFKR, and GLQYLRLSHNELADSGVPGNS. The N-linked (GlcNAc...) (keratan sulfate) asparagine glycan is linked to asparagine 88. N-linked (GlcNAc...) (keratan sulfate) asparagine glycosylation occurs at asparagine 127. Residue asparagine 160 is glycosylated (N-linked (GlcNAc...) (keratan sulfate) asparagine). A glycan (N-linked (GlcNAc...) (keratan sulfate) asparagine) is linked at asparagine 252. LRR repeat units lie at residues 255 to 276 and 277 to 296; these read SLLELDLSYNKLKSIPTVNENL and ENYYLEVNELEKFDVKSFCK. Cysteine 295 and cysteine 328 are joined by a disulfide. A Phosphoserine modification is found at serine 304. An LRR 11 repeat occupies 305-326; it reads KIKHLRLDGNPLTQSSLPPDMY.

The protein belongs to the small leucine-rich proteoglycan (SLRP) family. SLRP class II subfamily. Binds to laminin. Contains keratan sulfate. In terms of processing, cys-37, Cys-41, Cys-43 and Cys-53 are involved in disulfide bonds. In terms of tissue distribution, cornea and other tissues.

It localises to the secreted. Its subcellular location is the extracellular space. The protein resides in the extracellular matrix. This Mus musculus (Mouse) protein is Lumican (Lum).